A 309-amino-acid polypeptide reads, in one-letter code: Porphobilinogen deaminase (309 aa).

Position 244 is an S-(dipyrrolylmethanemethyl)cysteine (Cys-244).

Belongs to the HMBS family. As to quaternary structure, monomer. Dipyrromethane serves as cofactor.

The catalysed reaction is 4 porphobilinogen + H2O = hydroxymethylbilane + 4 NH4(+). It functions in the pathway porphyrin-containing compound metabolism; protoporphyrin-IX biosynthesis; coproporphyrinogen-III from 5-aminolevulinate: step 2/4. Tetrapolymerization of the monopyrrole PBG into the hydroxymethylbilane pre-uroporphyrinogen in several discrete steps. The sequence is that of Porphobilinogen deaminase from Listeria monocytogenes serovar 1/2a (strain ATCC BAA-679 / EGD-e).